The following is a 285-amino-acid chain: HTH-type transcriptional regulator MurR (285 aa).

An HTH rpiR-type domain is found at 1-77; that stretch reads MLYLTKIRNA…MALIGEYSAS (77 aa). The segment at residues 37–56 is a DNA-binding region (H-T-H motif); that stretch reads SRQMAKQLGISQSSIVKFAQ. The SIS domain maps to 128–268; it reads IIEVISKAPF…FVGLVQLNDV (141 aa).

Homotetramer.

It functions in the pathway amino-sugar metabolism; N-acetylmuramate degradation [regulation]. In terms of biological role, represses the expression of the murPQ operon involved in the uptake and degradation of N-acetylmuramic acid (MurNAc). Binds to two adjacent inverted repeats within the operator region. MurNAc 6-phosphate, the substrate of MurQ, is the specific inducer that weakens binding of MurR to the operator. This is HTH-type transcriptional regulator MurR from Escherichia coli (strain ATCC 8739 / DSM 1576 / NBRC 3972 / NCIMB 8545 / WDCM 00012 / Crooks).